The chain runs to 217 residues: Ras-related protein RABA2a (217 aa).

A GTP-binding site is contributed by 19–26; it reads GDSGVGKS. Residues 41–49 carry the Effector region motif; that stretch reads SKSTIGVEF. Residues 67-71, 125-128, and 155-156 each bind GTP; these read DTAGQ, NKTD, and SA. The S-palmitoyl cysteine moiety is linked to residue cysteine 213. A Cysteine methyl ester modification is found at cysteine 214. Cysteine 214 carries S-geranylgeranyl cysteine lipidation. Positions 215-217 are cleaved as a propeptide — removed in mature form; the sequence is SSS.

Belongs to the small GTPase superfamily. Rab family. As to expression, expressed in root tips.

It is found in the endosome membrane. It localises to the golgi apparatus. The protein localises to the trans-Golgi network membrane. Intracellular vesicle trafficking and protein transport. The protein is Ras-related protein RABA2a (RABA2A) of Arabidopsis thaliana (Mouse-ear cress).